Reading from the N-terminus, the 417-residue chain is Queuine tRNA-ribosyltransferase accessory subunit 2 (417 aa).

4 residues coordinate Zn(2+): Cys-324, Cys-326, Cys-329, and His-355.

This sequence belongs to the queuine tRNA-ribosyltransferase family. QTRT2 subfamily. As to quaternary structure, heterodimer of a catalytic subunit and an accessory subunit. Requires Zn(2+) as cofactor.

It localises to the cytoplasm. Non-catalytic subunit of the queuine tRNA-ribosyltransferase (TGT) that catalyzes the base-exchange of a guanine (G) residue with queuine (Q) at position 34 (anticodon wobble position) in tRNAs with GU(N) anticodons (tRNA-Asp, -Asn, -His and -Tyr), resulting in the hypermodified nucleoside queuosine (7-(((4,5-cis-dihydroxy-2-cyclopenten-1-yl)amino)methyl)-7-deazaguanosine). The sequence is that of Queuine tRNA-ribosyltransferase accessory subunit 2 from Drosophila pseudoobscura pseudoobscura (Fruit fly).